Here is a 283-residue protein sequence, read N- to C-terminus: MTSTRGEAAGIPSVSLNDGHSIPVLGLGVGELSEAEAERSVAAALEAGYRLIDTAAVYGNEAAVGRAVNASGIPREEIYVTTKLAVADQGFGTSQDAARASLERLGLDYVDLYLIHWPAGDHGKYIDSWGGLMKAKQDGVARSIGVCNFNAEHLSNIIDLSFFTPAINQIELHPLLNQAELREVNAGYGIVTEAYGPLGVGRLLDHAAVTGVAQAHGKTPAQVLLRWSIQLGNVVIARSANPDRITSNLEVFDFELTDDEMATLNGLDEGTRFRPDPETYTGP.

Tyr-58 (proton donor) is an active-site residue. Residues Gly-196, Leu-198, Val-200, Ile-236, Arg-238, Ser-239, Ala-240, Arg-244, Ser-247, Asn-248, and Arg-274 each coordinate NADPH.

Belongs to the aldo/keto reductase family.

The polypeptide is Aldo-keto reductase Mmcs_1938 (Mycobacterium sp. (strain MCS)).